The primary structure comprises 291 residues: Light-independent protochlorophyllide reductase iron-sulfur ATP-binding protein (291 aa).

Residues 10 to 15 and K39 contribute to the ATP site; that span reads GIGKST. S14 contributes to the Mg(2+) binding site. Residues C95 and C129 each contribute to the [4Fe-4S] cluster site. Position 180 to 181 (180 to 181) interacts with ATP; that stretch reads NR.

The protein belongs to the NifH/BchL/ChlL family. In terms of assembly, homodimer. Protochlorophyllide reductase is composed of three subunits; ChlL, ChlN and ChlB. The cofactor is [4Fe-4S] cluster.

It is found in the plastid. The protein resides in the chloroplast. The catalysed reaction is chlorophyllide a + oxidized 2[4Fe-4S]-[ferredoxin] + 2 ADP + 2 phosphate = protochlorophyllide a + reduced 2[4Fe-4S]-[ferredoxin] + 2 ATP + 2 H2O. It participates in porphyrin-containing compound metabolism; chlorophyll biosynthesis (light-independent). Its function is as follows. Component of the dark-operative protochlorophyllide reductase (DPOR) that uses Mg-ATP and reduced ferredoxin to reduce ring D of protochlorophyllide (Pchlide) to form chlorophyllide a (Chlide). This reaction is light-independent. The L component serves as a unique electron donor to the NB-component of the complex, and binds Mg-ATP. This Pinus koraiensis (Korean pine) protein is Light-independent protochlorophyllide reductase iron-sulfur ATP-binding protein.